The sequence spans 543 residues: Probable ubiquitin-conjugating enzyme E2 26 (543 aa).

The segment at 1–21 (MEPDVVEIPPPPLIASGSRTR) is disordered. The region spanning 271–431 (NWVKKVQADW…VFLLSLKTMV (161 aa)) is the UBC core domain. Cys-357 functions as the Glycyl thioester intermediate in the catalytic mechanism. The segment at 514–543 (LAEKPEPPMSNANTENQSKKKTRKRSRSSR) is disordered. A compositionally biased stretch (basic residues) spans 532–543 (KKKTRKRSRSSR).

This sequence belongs to the ubiquitin-conjugating enzyme family.

It catalyses the reaction S-ubiquitinyl-[E1 ubiquitin-activating enzyme]-L-cysteine + [E2 ubiquitin-conjugating enzyme]-L-cysteine = [E1 ubiquitin-activating enzyme]-L-cysteine + S-ubiquitinyl-[E2 ubiquitin-conjugating enzyme]-L-cysteine.. Its pathway is protein modification; protein ubiquitination. Functionally, accepts the ubiquitin from the E1 complex and catalyzes its covalent attachment to other proteins. In Arabidopsis thaliana (Mouse-ear cress), this protein is Probable ubiquitin-conjugating enzyme E2 26 (UBC26).